A 372-amino-acid polypeptide reads, in one-letter code: GDSL esterase/lipase At1g54020 (372 aa).

Residues 1–26 (MECSSVSVLGILLVFPLLHNLVTISG) form the signal peptide. The Nucleophile role is filled by serine 40. N-linked (GlcNAc...) asparagine glycans are attached at residues asparagine 161 and asparagine 280. Residues aspartate 314 and histidine 317 contribute to the active site.

It belongs to the 'GDSL' lipolytic enzyme family.

The protein resides in the secreted. This Arabidopsis thaliana (Mouse-ear cress) protein is GDSL esterase/lipase At1g54020.